We begin with the raw amino-acid sequence, 361 residues long: Peptide chain release factor 1 (361 aa).

Q235 is subject to N5-methylglutamine.

Belongs to the prokaryotic/mitochondrial release factor family. In terms of processing, methylated by PrmC. Methylation increases the termination efficiency of RF1.

It is found in the cytoplasm. In terms of biological role, peptide chain release factor 1 directs the termination of translation in response to the peptide chain termination codons UAG and UAA. This chain is Peptide chain release factor 1, found in Rhodopseudomonas palustris (strain ATCC BAA-98 / CGA009).